We begin with the raw amino-acid sequence, 194 residues long: Mitochondrial import inner membrane translocase subunit Tim22 (194 aa).

2 disulfide bridges follow: Cys-69-Cys-141 and Cys-160-Cys-179. The next 3 membrane-spanning stretches (helical) occupy residues 74-94 (ALACVGGFVLGGAFGVFTAGI), 123-143 (MSYAKNFAIVGAMFSCTECLV), and 170-190 (AGLKAGVIGCGGFAAFSAAID).

Belongs to the Tim17/Tim22/Tim23 family. In terms of assembly, component of the TIM22 complex, whose core is composed of TIMM22, associated with peripheral protein FXC1/TIMM10B and the 70 kDa heterohexamer. In most cases, the 70 kDa complex is composed of TIMM9 and TIMM10 (TIMM10A or TIMM10B). A small fraction of the 70 kDa complex is composed of TIMM8 (TIMM8A/DDP1 or TIMM8B/DDP2) and TIMM13. The TIM22 complex also contains AGK and TIMM29. Interacts directly with TIMM9, TIMM10A and FXC1/TIMM10B. Interacts (when oxidized) with TIMM29; interaction is direct. Disulfide bonds promote efficient assembly of the TIM22 complex.

The protein localises to the mitochondrion inner membrane. Essential core component of the TIM22 complex, a complex that mediates the import and insertion of multi-pass transmembrane proteins into the mitochondrial inner membrane. In the TIM22 complex, it constitutes the voltage-activated and signal-gated channel. Forms a twin-pore translocase that uses the membrane potential as external driving force in 2 voltage-dependent steps. This Bos taurus (Bovine) protein is Mitochondrial import inner membrane translocase subunit Tim22 (TIMM22).